The following is a 419-amino-acid chain: tRNA(Ile)-lysidine synthase (419 aa).

31–36 lines the ATP pocket; the sequence is SGGGDS.

This sequence belongs to the tRNA(Ile)-lysidine synthase family.

The protein localises to the cytoplasm. It carries out the reaction cytidine(34) in tRNA(Ile2) + L-lysine + ATP = lysidine(34) in tRNA(Ile2) + AMP + diphosphate + H(+). Functionally, ligates lysine onto the cytidine present at position 34 of the AUA codon-specific tRNA(Ile) that contains the anticodon CAU, in an ATP-dependent manner. Cytidine is converted to lysidine, thus changing the amino acid specificity of the tRNA from methionine to isoleucine. In Ruegeria pomeroyi (strain ATCC 700808 / DSM 15171 / DSS-3) (Silicibacter pomeroyi), this protein is tRNA(Ile)-lysidine synthase.